A 729-amino-acid chain; its full sequence is DNA topoisomerase 3 (729 aa).

Residues 3–136 (KSVVIAEKPS…IKRLWISSVT (134 aa)) enclose the Toprim domain. Mg(2+)-binding residues include Glu9 and Asp105. The Topo IA-type catalytic domain occupies 153 to 594 (YDNLYASAVA…EMKNYTKEIV (442 aa)). Positions 187 to 192 (NCGRVQ) are interaction with DNA. The active-site O-(5'-phospho-DNA)-tyrosine intermediate is Tyr310. Positions 686–713 (ERRKKESGNKADKRDVQKYMKQQKKEEE) are enriched in basic and acidic residues. Residues 686-718 (ERRKKESGNKADKRDVQKYMKQQKKEEEPLNNP) are disordered.

Belongs to the type IA topoisomerase family. Mg(2+) serves as cofactor.

It carries out the reaction ATP-independent breakage of single-stranded DNA, followed by passage and rejoining.. Its function is as follows. Releases the supercoiling and torsional tension of DNA, which is introduced during the DNA replication and transcription, by transiently cleaving and rejoining one strand of the DNA duplex. Introduces a single-strand break via transesterification at a target site in duplex DNA. The scissile phosphodiester is attacked by the catalytic tyrosine of the enzyme, resulting in the formation of a DNA-(5'-phosphotyrosyl)-enzyme intermediate and the expulsion of a 3'-OH DNA strand. The free DNA strand then undergoes passage around the unbroken strand, thus removing DNA supercoils. Finally, in the religation step, the DNA 3'-OH attacks the covalent intermediate to expel the active-site tyrosine and restore the DNA phosphodiester backbone. This chain is DNA topoisomerase 3, found in Bacillus cereus (strain ATCC 10987 / NRS 248).